A 127-amino-acid polypeptide reads, in one-letter code: Aspartate 1-decarboxylase (127 aa).

Serine 25 serves as the catalytic Schiff-base intermediate with substrate; via pyruvic acid. At serine 25 the chain carries Pyruvic acid (Ser). Position 57 (threonine 57) interacts with substrate. Tyrosine 58 serves as the catalytic Proton donor. 73–75 (GAA) contacts substrate.

It belongs to the PanD family. In terms of assembly, heterooctamer of four alpha and four beta subunits. Pyruvate serves as cofactor. In terms of processing, is synthesized initially as an inactive proenzyme, which is activated by self-cleavage at a specific serine bond to produce a beta-subunit with a hydroxyl group at its C-terminus and an alpha-subunit with a pyruvoyl group at its N-terminus.

Its subcellular location is the cytoplasm. It catalyses the reaction L-aspartate + H(+) = beta-alanine + CO2. It participates in cofactor biosynthesis; (R)-pantothenate biosynthesis; beta-alanine from L-aspartate: step 1/1. Functionally, catalyzes the pyruvoyl-dependent decarboxylation of aspartate to produce beta-alanine. The chain is Aspartate 1-decarboxylase from Neisseria meningitidis serogroup B (strain ATCC BAA-335 / MC58).